The chain runs to 256 residues: Pyridoxine 5'-phosphate synthase (256 aa).

Asn-12 contacts 3-amino-2-oxopropyl phosphate. 14 to 15 lines the 1-deoxy-D-xylulose 5-phosphate pocket; it reads DH. Arg-23 contributes to the 3-amino-2-oxopropyl phosphate binding site. His-48 (proton acceptor) is an active-site residue. 1-deoxy-D-xylulose 5-phosphate contacts are provided by Arg-50 and His-55. The active-site Proton acceptor is the Glu-75. Position 105 (Thr-105) interacts with 1-deoxy-D-xylulose 5-phosphate. His-199 acts as the Proton donor in catalysis. 3-amino-2-oxopropyl phosphate-binding positions include Gly-200 and 221–222; that span reads GY.

The protein belongs to the PNP synthase family. As to quaternary structure, homooctamer; tetramer of dimers.

The protein resides in the cytoplasm. The enzyme catalyses 3-amino-2-oxopropyl phosphate + 1-deoxy-D-xylulose 5-phosphate = pyridoxine 5'-phosphate + phosphate + 2 H2O + H(+). It participates in cofactor biosynthesis; pyridoxine 5'-phosphate biosynthesis; pyridoxine 5'-phosphate from D-erythrose 4-phosphate: step 5/5. Catalyzes the complicated ring closure reaction between the two acyclic compounds 1-deoxy-D-xylulose-5-phosphate (DXP) and 3-amino-2-oxopropyl phosphate (1-amino-acetone-3-phosphate or AAP) to form pyridoxine 5'-phosphate (PNP) and inorganic phosphate. This chain is Pyridoxine 5'-phosphate synthase, found in Bradyrhizobium sp. (strain ORS 278).